Consider the following 994-residue polypeptide: Bifunctional glutamine synthetase adenylyltransferase/adenylyl-removing enzyme (994 aa).

Positions 1 to 487 (MVVTKLATQR…LHTKLFYQPL (487 aa)) are adenylyl removase. Residues 492-994 (GPTGLEIAHG…KAVVRKVFGS (503 aa)) form an adenylyl transferase region.

Belongs to the GlnE family. The cofactor is Mg(2+).

The enzyme catalyses [glutamine synthetase]-O(4)-(5'-adenylyl)-L-tyrosine + phosphate = [glutamine synthetase]-L-tyrosine + ADP. The catalysed reaction is [glutamine synthetase]-L-tyrosine + ATP = [glutamine synthetase]-O(4)-(5'-adenylyl)-L-tyrosine + diphosphate. In terms of biological role, involved in the regulation of glutamine synthetase GlnA, a key enzyme in the process to assimilate ammonia. When cellular nitrogen levels are high, the C-terminal adenylyl transferase (AT) inactivates GlnA by covalent transfer of an adenylyl group from ATP to specific tyrosine residue of GlnA, thus reducing its activity. Conversely, when nitrogen levels are low, the N-terminal adenylyl removase (AR) activates GlnA by removing the adenylyl group by phosphorolysis, increasing its activity. The regulatory region of GlnE binds the signal transduction protein PII (GlnB) which indicates the nitrogen status of the cell. The sequence is that of Bifunctional glutamine synthetase adenylyltransferase/adenylyl-removing enzyme from Mycobacterium bovis (strain ATCC BAA-935 / AF2122/97).